Consider the following 350-residue polypeptide: tRNA pseudouridine synthase D (350 aa).

Phe27 lines the substrate pocket. The active-site Nucleophile is Asp80. Asn129 lines the substrate pocket. The TRUD domain occupies 155–303 (GVPNYFGVQR…VDTTRRAINL (149 aa)). Residue Phe329 participates in substrate binding.

The protein belongs to the pseudouridine synthase TruD family.

The catalysed reaction is uridine(13) in tRNA = pseudouridine(13) in tRNA. Its function is as follows. Responsible for synthesis of pseudouridine from uracil-13 in transfer RNAs. In Proteus mirabilis (strain HI4320), this protein is tRNA pseudouridine synthase D.